Reading from the N-terminus, the 221-residue chain is LEEDESAAASTMAVSASLMPPIWDKTIPYDGESFHLEYMDLDEFLLENGIPASPTHLAQNLLLPVAELEGKESASSSTASPPSSSTAVFQPSETVSSTESSLEKERETPSPIDPNCVEVDVNFNPDPADLVLSSVPGGELFNPRKHKFAEEDLKPQPMIKKAKKVFVPDEQKDEKYWTRRKKNNVAAKRSRDARRLKENQITIRAAFLEKENTALRTEVAD.

Residues 72 to 116 (ESASSSTASPPSSSTAVFQPSETVSSTESSLEKERETPSPIDPNC) are disordered. Over residues 73–100 (SASSSTASPPSSSTAVFQPSETVSSTES) the composition is skewed to low complexity. One can recognise a bZIP domain in the interval 173–221 (DEKYWTRRKKNNVAAKRSRDARRLKENQITIRAAFLEKENTALRTEVAD). Positions 175–195 (KYWTRRKKNNVAAKRSRDARR) are basic motif. Positions 196–203 (LKENQITI) are leucine-zipper.

This sequence belongs to the bZIP family. PAR subfamily. As to quaternary structure, binds DNA as a homodimer or a heterodimer. Can form a heterodimer with DBP.

The protein localises to the nucleus. Functionally, transcription factor that binds to and transactivates the TSHB promoter. Binds to a minimal DNA-binding sequence 5'-[TC][AG][AG]TTA[TC][AG]-3'. The sequence is that of Thyrotroph embryonic factor (TEF) from Phodopus sungorus (Striped hairy-footed hamster).